The primary structure comprises 37 residues: Large ribosomal subunit protein bL36 (37 aa).

This sequence belongs to the bacterial ribosomal protein bL36 family.

This chain is Large ribosomal subunit protein bL36, found in Clostridium kluyveri (strain NBRC 12016).